Reading from the N-terminus, the 1597-residue chain is Rho guanine nucleotide exchange factor 5 (1597 aa).

Disordered regions lie at residues Pro-138–Leu-246, Glu-258–Pro-455, and Gly-467–Glu-1072. Position 184 is a phosphoserine (Ser-184). The segment covering Glu-192 to Ile-204 has biased composition (polar residues). Residues Glu-217–Glu-237 show a composition bias toward low complexity. Residues Asn-266 to Gln-278 are compositionally biased toward basic and acidic residues. The span at Gly-299 to Asp-309 shows a compositional bias: acidic residues. Composition is skewed to basic and acidic residues over residues Gly-323 to Gly-368 and Arg-394 to Gly-404. Polar residues predominate over residues Leu-428–Glu-438. Ser-445 and Ser-450 each carry phosphoserine. Residues Ser-474 to Leu-490 are compositionally biased toward basic and acidic residues. The span at Pro-512 to Pro-522 shows a compositional bias: pro residues. Polar residues-rich tracts occupy residues Ser-583–His-601 and Asp-655–Arg-682. Residues Gln-731–Ala-746 show a composition bias toward basic and acidic residues. Pro residues-rich tracts occupy residues Pro-812–Ser-828 and Pro-838–Pro-856. Arg-866 carries the post-translational modification Asymmetric dimethylarginine. Residues Ala-901–Ser-920 are compositionally biased toward low complexity. The segment covering Ser-926 to Trp-941 has biased composition (polar residues). A compositionally biased stretch (basic and acidic residues) spans Ser-950 to Arg-969. Residues Ser-983, Ser-1011, and Ser-1044 each carry the phosphoserine modification. Over residues Gln-990–Gly-1012 the composition is skewed to basic and acidic residues. The span at Ala-1057–Glu-1072 shows a compositional bias: basic and acidic residues. Ser-1126 carries the phosphoserine modification. The DH domain maps to Lys-1174–Asn-1358. Residues Trp-1390 to Glu-1502 form the PH domain. In terms of domain architecture, SH3 spans Tyr-1510 to Asn-1571.

Interacts with SRC. Forms a ternary complex with SRC and the PI3K 85 kDa subunit. Interacts with and is activated by the heterodimer formed by GNB1 and GNG2. Interacts with ODAM (via C-terminus). Interacts with RHOA. Activation of SRC induces tyrosine phosphorylation of ARHGEF5. As to expression, ubiquitously expressed with highest levels in placenta. High levels are also found in colon, kidney, trachea, prostate, liver, pancreas, pituitary gland, thyroid gland and mammary gland. In fetal tissues, expressed at high levels in kidney, lung and liver. Expressed at low levels in lung and heart.

It localises to the cytoplasm. The protein resides in the nucleus. The protein localises to the cell projection. It is found in the podosome. Its function is as follows. Guanine nucleotide exchange factor which activates Rho GTPases. Strongly activates RHOA. Also strongly activates RHOB, weakly activates RHOC and RHOG and shows no effect on RHOD, RHOV, RHOQ or RAC1. Involved in regulation of cell shape and actin cytoskeletal organization. Plays a role in actin organization by generating a loss of actin stress fibers and the formation of membrane ruffles and filopodia. Required for SRC-induced podosome formation. Involved in positive regulation of immature dendritic cell migration. The polypeptide is Rho guanine nucleotide exchange factor 5 (ARHGEF5) (Homo sapiens (Human)).